A 176-amino-acid chain; its full sequence is ATP-dependent protease subunit HslV (176 aa).

Threonine 5 is a catalytic residue. Na(+) is bound by residues serine 161, cysteine 164, and threonine 167.

It belongs to the peptidase T1B family. HslV subfamily. As to quaternary structure, a double ring-shaped homohexamer of HslV is capped on each side by a ring-shaped HslU homohexamer. The assembly of the HslU/HslV complex is dependent on binding of ATP.

The protein localises to the cytoplasm. The catalysed reaction is ATP-dependent cleavage of peptide bonds with broad specificity.. Allosterically activated by HslU binding. Its function is as follows. Protease subunit of a proteasome-like degradation complex believed to be a general protein degrading machinery. The polypeptide is ATP-dependent protease subunit HslV (Desulfitobacterium hafniense (strain Y51)).